Reading from the N-terminus, the 134-residue chain is Cytochrome c-type biogenesis protein CcmE (134 aa).

Residues 1 to 7 (MKRKYRR) lie on the Cytoplasmic side of the membrane. A helical; Signal-anchor for type II membrane protein membrane pass occupies residues 8–28 (LFVVIITLSIFAGSVVFVLGK). Topologically, residues 29 to 134 (LKNNVSFFYT…MPNKYKTNNL (106 aa)) are periplasmic. 2 residues coordinate heme: His120 and Tyr124.

The protein belongs to the CcmE/CycJ family.

The protein resides in the cell inner membrane. In terms of biological role, heme chaperone required for the biogenesis of c-type cytochromes. Transiently binds heme delivered by CcmC and transfers the heme to apo-cytochromes in a process facilitated by CcmF and CcmH. The protein is Cytochrome c-type biogenesis protein CcmE of Ehrlichia ruminantium (strain Gardel).